The sequence spans 128 residues: Ribonuclease pancreatic B (128 aa).

The interval 1 to 21 (AESSAMKFQRQHMDPEGSPSN) is disordered. Positions 7 and 10 each coordinate substrate. The active-site Proton acceptor is the histidine 12. Residues asparagine 21 and asparagine 34 are each glycosylated (N-linked (GlcNAc...) asparagine). Cystine bridges form between cysteine 26–cysteine 84, cysteine 40–cysteine 95, cysteine 58–cysteine 110, and cysteine 65–cysteine 72. Substrate is bound by residues 41-45 (KPVNT), lysine 66, and arginine 85. Residue histidine 119 is the Proton donor of the active site.

This sequence belongs to the pancreatic ribonuclease family. In terms of tissue distribution, pancreas.

Its subcellular location is the secreted. It catalyses the reaction an [RNA] containing cytidine + H2O = an [RNA]-3'-cytidine-3'-phosphate + a 5'-hydroxy-ribonucleotide-3'-[RNA].. It carries out the reaction an [RNA] containing uridine + H2O = an [RNA]-3'-uridine-3'-phosphate + a 5'-hydroxy-ribonucleotide-3'-[RNA].. The protein is Ribonuclease pancreatic B of Cavia porcellus (Guinea pig).